We begin with the raw amino-acid sequence, 604 residues long: Phenylalanine--tRNA ligase beta subunit (604 aa).

Residues 327-402 (YFQEKREVAH…LGRTLDRFSP (76 aa)) form the B5 domain. Mg(2+) contacts are provided by Asp-380, Asp-386, Glu-389, and Glu-390.

Belongs to the phenylalanyl-tRNA synthetase beta subunit family. Type 2 subfamily. As to quaternary structure, tetramer of two alpha and two beta subunits. The cofactor is Mg(2+).

The protein localises to the cytoplasm. The catalysed reaction is tRNA(Phe) + L-phenylalanine + ATP = L-phenylalanyl-tRNA(Phe) + AMP + diphosphate + H(+). The sequence is that of Phenylalanine--tRNA ligase beta subunit from Treponema pallidum subsp. pallidum (strain SS14).